Here is a 207-residue protein sequence, read N- to C-terminus: Ribosomal RNA large subunit methyltransferase E (207 aa).

Residues glycine 60, tryptophan 62, aspartate 80, aspartate 96, and aspartate 121 each contribute to the S-adenosyl-L-methionine site. Lysine 161 functions as the Proton acceptor in the catalytic mechanism.

The protein belongs to the class I-like SAM-binding methyltransferase superfamily. RNA methyltransferase RlmE family.

Its subcellular location is the cytoplasm. It carries out the reaction uridine(2552) in 23S rRNA + S-adenosyl-L-methionine = 2'-O-methyluridine(2552) in 23S rRNA + S-adenosyl-L-homocysteine + H(+). Functionally, specifically methylates the uridine in position 2552 of 23S rRNA at the 2'-O position of the ribose in the fully assembled 50S ribosomal subunit. This is Ribosomal RNA large subunit methyltransferase E from Ectopseudomonas mendocina (strain ymp) (Pseudomonas mendocina).